The chain runs to 235 residues: Peroxisomal membrane protein 11C (235 aa).

At 1-91 the chain is on the cytoplasmic side; sequence MSTLETTRAE…LPLVLLGKSK (91 aa). A helical membrane pass occupies residues 92-108; sequence NALLSTFLFLDQIVWLG. Over 109–206 the chain is Lumenal; it reads RTGIYKDKER…LLQLAPKKVT (98 aa). Residues 207 to 226 traverse the membrane as a helical segment; that stretch reads PRVTGAFGFASSLISCYQLL. At 227-235 the chain is on the cytoplasmic side; it reads PSHPKSKMV.

Belongs to the peroxin-11 family. In terms of assembly, homooligomer. Interacts with ARC5 and FIS1B on peroxisomes. Expressed in roots and developing siliques.

The protein localises to the peroxisome membrane. Its function is as follows. Involved in peroxisomal proliferation. Promotes peroxisomal duplication, aggregation or elongation without fission. In Arabidopsis thaliana (Mouse-ear cress), this protein is Peroxisomal membrane protein 11C (PEX11C).